A 368-amino-acid polypeptide reads, in one-letter code: F-box only protein 28 (368 aa).

The span at Met1 to Glu11 shows a compositional bias: basic and acidic residues. The disordered stretch occupies residues Met1–Gln57. Gly residues predominate over residues Glu12–Gly21. Pro residues predominate over residues Leu32–Ala52. The F-box domain maps to Asn61–Val109. Phosphoserine is present on residues Ser235 and Ser242. Thr270 carries the post-translational modification Phosphothreonine. A disordered region spans residues Met328–Lys368. Ser344 carries the phosphoserine modification.

As to quaternary structure, part of a SCF (SKP1-cullin-F-box) protein ligase complex.

The protein localises to the chromosome. It is found in the centromere. Its subcellular location is the kinetochore. In terms of biological role, probably recognizes and binds to some phosphorylated proteins and promotes their ubiquitination and degradation. This chain is F-box only protein 28 (FBXO28), found in Bos taurus (Bovine).